Reading from the N-terminus, the 141-residue chain is Transcription antitermination protein NusB (141 aa).

It belongs to the NusB family.

Involved in transcription antitermination. Required for transcription of ribosomal RNA (rRNA) genes. Binds specifically to the boxA antiterminator sequence of the ribosomal RNA (rrn) operons. This is Transcription antitermination protein NusB from Neisseria meningitidis serogroup C (strain 053442).